The primary structure comprises 557 residues: Potassium-transporting ATPase potassium-binding subunit (557 aa).

A run of 10 helical transmembrane segments spans residues 6-26 (IQLL…GLGL), 59-79 (ALSL…ILFF), 127-147 (AGLT…LLAL), 172-192 (LYVL…FGVV), 247-267 (ISNF…VFLY), 278-298 (WAIF…VWTF), 363-383 (IVFG…LLTV), 410-430 (ILGI…SVSV), 475-495 (VMIA…VLVI), and 520-540 (FYIL…FPVL).

This sequence belongs to the KdpA family. The system is composed of three essential subunits: KdpA, KdpB and KdpC.

Its subcellular location is the cell inner membrane. Functionally, part of the high-affinity ATP-driven potassium transport (or Kdp) system, which catalyzes the hydrolysis of ATP coupled with the electrogenic transport of potassium into the cytoplasm. This subunit binds the periplasmic potassium ions and delivers the ions to the membrane domain of KdpB through an intramembrane tunnel. This Leptospira interrogans serogroup Icterohaemorrhagiae serovar copenhageni (strain Fiocruz L1-130) protein is Potassium-transporting ATPase potassium-binding subunit.